A 423-amino-acid chain; its full sequence is Adenylosuccinate synthetase (423 aa).

GTP-binding positions include 12–18 and 40–42; these read GDEGKGK and GHT. Asp13 (proton acceptor) is an active-site residue. Mg(2+) contacts are provided by Asp13 and Gly40. IMP-binding positions include 13–16, 38–41, Thr129, Arg143, Gln221, Thr236, and Arg300; these read DEGK and NAGH. The active-site Proton donor is His41. Substrate is bound at residue 296-302; it reads AVTGRKR. GTP is bound by residues Arg302, 328 to 330, and 408 to 410; these read KSD and SVG.

This sequence belongs to the adenylosuccinate synthetase family. As to quaternary structure, homodimer. Mg(2+) is required as a cofactor.

The protein localises to the cytoplasm. The catalysed reaction is IMP + L-aspartate + GTP = N(6)-(1,2-dicarboxyethyl)-AMP + GDP + phosphate + 2 H(+). It functions in the pathway purine metabolism; AMP biosynthesis via de novo pathway; AMP from IMP: step 1/2. Functionally, plays an important role in the de novo pathway of purine nucleotide biosynthesis. Catalyzes the first committed step in the biosynthesis of AMP from IMP. The protein is Adenylosuccinate synthetase of Parabacteroides distasonis (strain ATCC 8503 / DSM 20701 / CIP 104284 / JCM 5825 / NCTC 11152).